Here is an 853-residue protein sequence, read N- to C-terminus: Auxin response factor 23 (853 aa).

Positions 121 to 141 are disordered; sequence KQQEDNGSTEEEVPSAPAAGH. The TF-B3 DNA-binding region spans 149–251; it reads FCKTLTASDT…ELRVGVRRAM (103 aa). Disordered regions lie at residues 422–471 and 647–723; these read ESEP…NNTP and PAKS…QGVS. Residues 425–455 are compositionally biased toward polar residues; sequence PNGTQRTFQTQENATPKSGFGNSSELESAQK. Over residues 672 to 686 the composition is skewed to basic and acidic residues; the sequence is EWRRPDVTEVEKCSD. Polar residues predominate over residues 706 to 723; the sequence is PSSQQASRNMSCKSQGVS. In terms of domain architecture, PB1 spans 725 to 809; that stretch reads RSCKKVHKQG…HKIFIYTREE (85 aa). Residues 815 to 853 are disordered; it reads PGTLNSRSEDSHANSMERGSVGREMRGCLSTSSLNSENC. The span at 843-853 shows a compositional bias: polar residues; that stretch reads LSTSSLNSENC.

This sequence belongs to the ARF family. In terms of assembly, homodimers and heterodimers.

The protein resides in the nucleus. In terms of biological role, auxin response factors (ARFs) are transcriptional factors that bind specifically to the DNA sequence 5'-TGTCTC-3' found in the auxin-responsive promoter elements (AuxREs). The polypeptide is Auxin response factor 23 (ARF23) (Oryza sativa subsp. indica (Rice)).